Here is a 1098-residue protein sequence, read N- to C-terminus: Paired amphipathic helix protein Sin3b (1098 aa).

Positions 1–25 (MAHAGSGGSAGRGFGGSRWGRSGSG) are enriched in gly residues. Residues 1–26 (MAHAGSGGSAGRGFGGSRWGRSGSGG) form a disordered region. The interval 1-299 (MAHAGSGGSA…VGKYGTLQEF (299 aa)) is interaction with CRY1. PAH domains are found at residues 30 to 100 (LPVH…LPLG) and 145 to 230 (VPLE…LPEA). Positions 52–98 (PATYNGFLEIMKEFKSQSIDTPGVIRRVSQLFHEHPDLIVGFNAFLP) are interaction with REST. Polar residues predominate over residues 238-247 (NGSCEMNSGQ). Residues 238–274 (NGSCEMNSGQKNEEKSLEHNKKRSRPSLLRPVSAPAK) form a disordered region. The interval 275–499 (KKMKLRGTKD…CLGGTSEVIQ (225 aa)) is interaction with NCOR1. In terms of domain architecture, PAH 3 spans 283–360 (KDLSIAAVGK…AQFKSFLGVK (78 aa)). Positions 383–550 (ASCKRIGSSY…REAQQGFNKI (168 aa)) are interaction with SUDS3 and HDAC1. The segment at 661 to 702 (QQCPGTSDDSADERDRDRDSAEPERRRPTDEKPPADASPEPP) is disordered. Phosphoserine is present on residues S667 and S670. The segment covering 673-694 (ERDRDRDSAEPERRRPTDEKPP) has biased composition (basic and acidic residues).

In terms of assembly, component of the SIN3B complex, which includes SIN3B, HDAC2 or HDAC1, PHF12 and MORF4L1. Interacts with FOXK1/MNF, MXI, MAD, NCOR1 and SAP30. Interaction with SUDS3 enhances the interaction with HDAC1 to form a complex. Interacts with CRY1, HCFC1, MAD3, MAD4, MAEL, REST, RNF220 and SETDB1. Interacts with C6orf89. Interacts with MYT1L. Ubiquitinated by RNF220 that leads to proteasomal degradation.

The protein resides in the nucleus. In terms of biological role, acts as a transcriptional repressor. Interacts with MXI1 to repress MYC responsive genes and antagonize MYC oncogenic activities. Interacts with MAD-MAX heterodimers by binding to MAD. The heterodimer then represses transcription by tethering SIN3B to DNA. Also forms a complex with FOXK1 which represses transcription. With FOXK1, regulates cell cycle progression probably by repressing cell cycle inhibitor genes expression. As part of the SIN3B complex represses transcription and counteracts the histone acetyltransferase activity of EP300 through the recognition H3K27ac marks by PHF12 and the activity of the histone deacetylase HDAC2. SIN3B complex is recruited downstream of the constitutively active genes transcriptional start sites through interaction with histones and mitigates histone acetylation and RNA polymerase II progression within transcribed regions contributing to the regulation of transcription. The sequence is that of Paired amphipathic helix protein Sin3b (Sin3b) from Mus musculus (Mouse).